The primary structure comprises 366 residues: MKPFLRQQLARYTDRLGELEFLLSREDIMQDMKQFLLLSREHTEVGAVASRWARYQQLEADLSGAQELLRGSVDDPDMTAMAQEEIDNASAELQKLENELQRMLLPKDPDDARNAFVEIRAGTGGDESALFAADLLRMYTRYCERRGWKAEIISESPSELGGYKEVVIKIEGDHVYGALKFESGGHRVQRVPVTETQGRIHTSACTVAVLAEPDEAVAIQINPADLRIDTYRASGAGGQHINKTDSAVRITHLPTGIVAECQDGRSQHSNKAQALKVLTARIHEKDRSERAAKDAAERKGLIGSGDRSDRIRTYNFPQGRLTDHRINLTLYKLLTIMEGDLDDVVQALQAFEAAQQLAALELGAGA.

An N5-methylglutamine modification is found at Q239.

It belongs to the prokaryotic/mitochondrial release factor family. Methylated by PrmC. Methylation increases the termination efficiency of RF1.

It localises to the cytoplasm. In terms of biological role, peptide chain release factor 1 directs the termination of translation in response to the peptide chain termination codons UAG and UAA. This Albidiferax ferrireducens (strain ATCC BAA-621 / DSM 15236 / T118) (Rhodoferax ferrireducens) protein is Peptide chain release factor 1.